Consider the following 213-residue polypeptide: 3-isopropylmalate dehydratase small subunit (213 aa).

It belongs to the LeuD family. LeuD type 1 subfamily. Heterodimer of LeuC and LeuD.

It carries out the reaction (2R,3S)-3-isopropylmalate = (2S)-2-isopropylmalate. Its pathway is amino-acid biosynthesis; L-leucine biosynthesis; L-leucine from 3-methyl-2-oxobutanoate: step 2/4. Catalyzes the isomerization between 2-isopropylmalate and 3-isopropylmalate, via the formation of 2-isopropylmaleate. The chain is 3-isopropylmalate dehydratase small subunit from Pseudomonas savastanoi pv. phaseolicola (strain 1448A / Race 6) (Pseudomonas syringae pv. phaseolicola (strain 1448A / Race 6)).